A 604-amino-acid chain; its full sequence is MAMRSHYCGLVTEALMGQTVTLAGWVNRRRDHGGVIFIDLRDREGNVQVVCDPDRADMFKTAEGVRNEFCVQVKGLVRARPEGTTNDSLKSGRIEVLCHELNVLNPSVTPPFQMDDENLSETTRLTHRVLDLRRPYMQRNLMLRYKTAIQVRNFLDKEGFIDIETPMLGKSTPEGARDYLVPSRVHDGQFFALPQSPQLYKQMLMVAGYDRYYQITKCFRDEDLRADRQPEFTQIDCETSFLNEEEIRAIFQRMVTEVFKTQLDVDLGEFPIMTYQDAAFRFGSDKPDLRVKLEFTELTEVMKDVDFKVFSGAANMQGGRVVALRVPGGARENGGLSRGEIDAYTEFVKIYGAKGLAYIKVNELAKGRDGLQSPIVKNIHDAAIAEILKRTGAQDGDLLFFGADKTKVVNDAIGALRLKIGHSEFGRKNGLFENVWAPLWVVDFPMFEYDEDDARWVAVHHPFTSPKDGHEDLMDTDPGKCLAKAYDMVLNGWELGGGSVRIHRAEVQSKVFAALKLTPEDARAKFGYLLDALQYGAPPHGGLAFGLDRLITLMTGAESIRDVIAFPKTQRAQDLLTQAPSPVDEKQLRELHIRLRNPDAAKAA.

E174 is a binding site for L-aspartate. The tract at residues 198–201 (QLYK) is aspartate. R220 contributes to the L-aspartate binding site. ATP contacts are provided by residues 220–222 (RDE) and Q229. H460 lines the L-aspartate pocket. ATP is bound at residue E494. Residue R501 participates in L-aspartate binding. 546-549 (GLDR) contacts ATP.

Belongs to the class-II aminoacyl-tRNA synthetase family. Type 1 subfamily. Homodimer.

The protein localises to the cytoplasm. The catalysed reaction is tRNA(Asx) + L-aspartate + ATP = L-aspartyl-tRNA(Asx) + AMP + diphosphate. Its function is as follows. Aspartyl-tRNA synthetase with relaxed tRNA specificity since it is able to aspartylate not only its cognate tRNA(Asp) but also tRNA(Asn). Reaction proceeds in two steps: L-aspartate is first activated by ATP to form Asp-AMP and then transferred to the acceptor end of tRNA(Asp/Asn). This is Aspartate--tRNA(Asp/Asn) ligase from Paracidovorax citrulli (strain AAC00-1) (Acidovorax citrulli).